Reading from the N-terminus, the 218-residue chain is Ribose-5-phosphate isomerase A (218 aa).

Substrate contacts are provided by residues 28–31, 81–84, and 94–97; these read TGST, DGAD, and KGGG. The active-site Proton acceptor is the glutamate 103. Lysine 121 is a substrate binding site.

Belongs to the ribose 5-phosphate isomerase family. Homodimer.

It carries out the reaction aldehydo-D-ribose 5-phosphate = D-ribulose 5-phosphate. The protein operates within carbohydrate degradation; pentose phosphate pathway; D-ribose 5-phosphate from D-ribulose 5-phosphate (non-oxidative stage): step 1/1. Functionally, catalyzes the reversible conversion of ribose-5-phosphate to ribulose 5-phosphate. The sequence is that of Ribose-5-phosphate isomerase A from Psychromonas ingrahamii (strain DSM 17664 / CCUG 51855 / 37).